A 753-amino-acid polypeptide reads, in one-letter code: 5-methyltetrahydropteroyltriglutamate--homocysteine methyltransferase (753 aa).

Residues 17–20 (RELK) and lysine 117 each bind 5-methyltetrahydropteroyltri-L-glutamate. L-homocysteine is bound by residues 431–433 (IGS) and glutamate 484. L-methionine contacts are provided by residues 431–433 (IGS) and glutamate 484. 5-methyltetrahydropteroyltri-L-glutamate-binding positions include 515-516 (RC) and tryptophan 561. Aspartate 599 contributes to the L-homocysteine binding site. Aspartate 599 is an L-methionine binding site. Glutamate 605 provides a ligand contact to 5-methyltetrahydropteroyltri-L-glutamate. Positions 641, 643, and 665 each coordinate Zn(2+). Histidine 694 functions as the Proton donor in the catalytic mechanism. Position 726 (cysteine 726) interacts with Zn(2+).

It belongs to the vitamin-B12 independent methionine synthase family. As to quaternary structure, monomer. The cofactor is Zn(2+).

The enzyme catalyses 5-methyltetrahydropteroyltri-L-glutamate + L-homocysteine = tetrahydropteroyltri-L-glutamate + L-methionine. The protein operates within amino-acid biosynthesis; L-methionine biosynthesis via de novo pathway; L-methionine from L-homocysteine (MetE route): step 1/1. Catalyzes the transfer of a methyl group from 5-methyltetrahydrofolate to homocysteine resulting in methionine formation. In Escherichia coli (strain K12), this protein is 5-methyltetrahydropteroyltriglutamate--homocysteine methyltransferase.